The primary structure comprises 36 residues: Photosystem I reaction center subunit VIII (36 aa).

Residues 9–29 (ILTPVVTLVFPGLMFALFFVL) traverse the membrane as a helical segment.

The protein belongs to the PsaI family.

The protein localises to the plastid. The protein resides in the chloroplast thylakoid membrane. Its function is as follows. May help in the organization of the PsaL subunit. This is Photosystem I reaction center subunit VIII from Emiliania huxleyi (Coccolithophore).